The primary structure comprises 209 residues: dTTP/UTP pyrophosphatase (209 aa).

Aspartate 79 acts as the Proton acceptor in catalysis.

Belongs to the Maf family. YhdE subfamily. The cofactor is a divalent metal cation.

The protein localises to the cytoplasm. It carries out the reaction dTTP + H2O = dTMP + diphosphate + H(+). The enzyme catalyses UTP + H2O = UMP + diphosphate + H(+). In terms of biological role, nucleoside triphosphate pyrophosphatase that hydrolyzes dTTP and UTP. May have a dual role in cell division arrest and in preventing the incorporation of modified nucleotides into cellular nucleic acids. This Chelativorans sp. (strain BNC1) protein is dTTP/UTP pyrophosphatase.